We begin with the raw amino-acid sequence, 330 residues long: Malate dehydrogenase (330 aa).

15–21 (GAGGQIG) contributes to the NAD(+) binding site. Arg-95 and Arg-101 together coordinate substrate. NAD(+)-binding positions include Asn-108, Gln-115, and 132–134 (VGN). Positions 134 and 165 each coordinate substrate. His-190 serves as the catalytic Proton acceptor.

The protein belongs to the LDH/MDH superfamily. MDH type 2 family.

It catalyses the reaction (S)-malate + NAD(+) = oxaloacetate + NADH + H(+). Functionally, catalyzes the reversible oxidation of malate to oxaloacetate. The protein is Malate dehydrogenase of Corynebacterium jeikeium (strain K411).